The chain runs to 1178 residues: DNA-directed RNA polymerase subunit beta' (1178 aa).

Residues C60, C62, C75, and C78 each contribute to the Zn(2+) site. Mg(2+) is bound by residues D450, D452, and D454. Zn(2+) is bound by residues C795, C869, C876, and C879.

It belongs to the RNA polymerase beta' chain family. In terms of assembly, the RNAP catalytic core consists of 2 alpha, 1 beta, 1 beta' and 1 omega subunit. When a sigma factor is associated with the core the holoenzyme is formed, which can initiate transcription. It depends on Mg(2+) as a cofactor. Zn(2+) serves as cofactor.

It catalyses the reaction RNA(n) + a ribonucleoside 5'-triphosphate = RNA(n+1) + diphosphate. Its function is as follows. DNA-dependent RNA polymerase catalyzes the transcription of DNA into RNA using the four ribonucleoside triphosphates as substrates. The sequence is that of DNA-directed RNA polymerase subunit beta' from Clostridium botulinum (strain ATCC 19397 / Type A).